Reading from the N-terminus, the 304-residue chain is Oxygen-dependent coproporphyrinogen-III oxidase (304 aa).

Ser-93 is a substrate binding site. A divalent metal cation is bound by residues His-97 and His-107. Catalysis depends on His-107, which acts as the Proton donor. 109-111 (NVR) is a substrate binding site. A divalent metal cation contacts are provided by His-146 and His-176. The important for dimerization stretch occupies residues 241–276 (YVEFNLVYDRGTLFGLQSGGRTESILMSLPPQVRWG). A substrate-binding site is contributed by 259–261 (GGR).

This sequence belongs to the aerobic coproporphyrinogen-III oxidase family. In terms of assembly, homodimer. The cofactor is a divalent metal cation.

It localises to the cytoplasm. The enzyme catalyses coproporphyrinogen III + O2 + 2 H(+) = protoporphyrinogen IX + 2 CO2 + 2 H2O. It functions in the pathway porphyrin-containing compound metabolism; protoporphyrin-IX biosynthesis; protoporphyrinogen-IX from coproporphyrinogen-III (O2 route): step 1/1. Involved in the heme biosynthesis. Catalyzes the aerobic oxidative decarboxylation of propionate groups of rings A and B of coproporphyrinogen-III to yield the vinyl groups in protoporphyrinogen-IX. The sequence is that of Oxygen-dependent coproporphyrinogen-III oxidase from Pseudomonas syringae pv. tomato (strain ATCC BAA-871 / DC3000).